Here is a 57-residue protein sequence, read N- to C-terminus: MNLLQVVRDHWVHVLVPMGFVFGYYLDRKNDEKLTAFRNKSLLYKRELKPNEEVTWK.

Residues 10–26 (HWVHVLVPMGFVFGYYL) form a helical membrane-spanning segment.

This sequence belongs to the complex I NDUFB1 subunit family. In terms of assembly, complex I is composed of 45 different subunits.

It is found in the mitochondrion inner membrane. Functionally, accessory subunit of the mitochondrial membrane respiratory chain NADH dehydrogenase (Complex I) that is believed not to be involved in catalysis. Complex I functions in the transfer of electrons from NADH to the respiratory chain. The immediate electron acceptor for the enzyme is believed to be ubiquinone. In Bos taurus (Bovine), this protein is NADH dehydrogenase [ubiquinone] 1 beta subcomplex subunit 1 (NDUFB1).